The primary structure comprises 336 residues: UDP-N-acetylenolpyruvoylglucosamine reductase (336 aa).

The FAD-binding PCMH-type domain maps to 17–188 (LRSLAERFVE…WDVTFRLPKK (172 aa)). Arg164 is a catalytic residue. The active-site Proton donor is Ser237. Glu332 is an active-site residue.

The protein belongs to the MurB family. The cofactor is FAD.

The protein resides in the cytoplasm. It carries out the reaction UDP-N-acetyl-alpha-D-muramate + NADP(+) = UDP-N-acetyl-3-O-(1-carboxyvinyl)-alpha-D-glucosamine + NADPH + H(+). Its pathway is cell wall biogenesis; peptidoglycan biosynthesis. Functionally, cell wall formation. This is UDP-N-acetylenolpyruvoylglucosamine reductase from Bdellovibrio bacteriovorus (strain ATCC 15356 / DSM 50701 / NCIMB 9529 / HD100).